A 403-amino-acid polypeptide reads, in one-letter code: Phosphopentomutase (403 aa).

Residues Asp13, Asp298, His303, Asp339, His340, and His351 each coordinate Mn(2+).

This sequence belongs to the phosphopentomutase family. Requires Mn(2+) as cofactor.

It localises to the cytoplasm. It catalyses the reaction 2-deoxy-alpha-D-ribose 1-phosphate = 2-deoxy-D-ribose 5-phosphate. It carries out the reaction alpha-D-ribose 1-phosphate = D-ribose 5-phosphate. It functions in the pathway carbohydrate degradation; 2-deoxy-D-ribose 1-phosphate degradation; D-glyceraldehyde 3-phosphate and acetaldehyde from 2-deoxy-alpha-D-ribose 1-phosphate: step 1/2. In terms of biological role, isomerase that catalyzes the conversion of deoxy-ribose 1-phosphate (dRib-1-P) and ribose 1-phosphate (Rib-1-P) to deoxy-ribose 5-phosphate (dRib-5-P) and ribose 5-phosphate (Rib-5-P), respectively. The protein is Phosphopentomutase of Streptococcus pneumoniae serotype 19F (strain G54).